The chain runs to 83 residues: Small ribosomal subunit protein bS16 (83 aa).

This sequence belongs to the bacterial ribosomal protein bS16 family.

This Finegoldia magna (strain ATCC 29328 / DSM 20472 / WAL 2508) (Peptostreptococcus magnus) protein is Small ribosomal subunit protein bS16.